We begin with the raw amino-acid sequence, 397 residues long: Subtilisin-like protease 3 (397 aa).

An N-terminal signal peptide occupies residues 1-19 (MGCIKVISVFLAAVAAVDA). The propeptide occupies 20–116 (RAFFHNRGGN…VEHDRVVKLA (97 aa)). The Inhibitor I9 domain occupies 35–116 (SYIVVMKDGV…VEHDRVVKLA (82 aa)). A Peptidase S8 domain is found at 126–397 (TWGLGRVSHK…NKLLYNGSGR (272 aa)). Catalysis depends on charge relay system residues D158 and H189. N250 carries an N-linked (GlcNAc...) asparagine glycan. S344 (charge relay system) is an active-site residue. Residue N393 is glycosylated (N-linked (GlcNAc...) asparagine).

The protein belongs to the peptidase S8 family.

It is found in the secreted. In terms of biological role, secreted subtilisin-like serine protease with keratinolytic activity that contributes to pathogenicity. The sequence is that of Subtilisin-like protease 3 (SUB3) from Arthroderma otae (strain ATCC MYA-4605 / CBS 113480) (Microsporum canis).